We begin with the raw amino-acid sequence, 370 residues long: 2-aminoethylphosphonate--pyruvate transaminase 2 (370 aa).

Lys-194 is modified (N6-(pyridoxal phosphate)lysine).

It belongs to the class-V pyridoxal-phosphate-dependent aminotransferase family. PhnW subfamily. Homodimer. Pyridoxal 5'-phosphate serves as cofactor.

It catalyses the reaction (2-aminoethyl)phosphonate + pyruvate = phosphonoacetaldehyde + L-alanine. Its function is as follows. Involved in phosphonate degradation. In Paraburkholderia xenovorans (strain LB400), this protein is 2-aminoethylphosphonate--pyruvate transaminase 2.